The primary structure comprises 1070 residues: DNA-directed RNA polymerase subunit beta (1070 aa).

It belongs to the RNA polymerase beta chain family. In plastids the minimal PEP RNA polymerase catalytic core is composed of four subunits: alpha, beta, beta', and beta''. When a (nuclear-encoded) sigma factor is associated with the core the holoenzyme is formed, which can initiate transcription.

Its subcellular location is the plastid. It carries out the reaction RNA(n) + a ribonucleoside 5'-triphosphate = RNA(n+1) + diphosphate. Functionally, DNA-dependent RNA polymerase catalyzes the transcription of DNA into RNA using the four ribonucleoside triphosphates as substrates. The polypeptide is DNA-directed RNA polymerase subunit beta (Cuscuta exaltata (Tall dodder)).